Here is a 154-residue protein sequence, read N- to C-terminus: Stigma-specific STIG1-like protein 3 (154 aa).

The first 23 residues, 1–23 (MGHRNTVLTILLTISIAIMVLIA), serve as a signal peptide directing secretion.

Belongs to the STIG1 family.

This chain is Stigma-specific STIG1-like protein 3, found in Arabidopsis thaliana (Mouse-ear cress).